The sequence spans 238 residues: Uridylate kinase (238 aa).

12–15 (KLSG) serves as a coordination point for ATP. Residue G54 participates in UMP binding. Residues G55 and R59 each contribute to the ATP site. UMP is bound by residues D74 and 135–142 (TGNPFFTT). ATP-binding residues include T162, Y168, and D171.

It belongs to the UMP kinase family. As to quaternary structure, homohexamer.

The protein resides in the cytoplasm. The catalysed reaction is UMP + ATP = UDP + ADP. Its pathway is pyrimidine metabolism; CTP biosynthesis via de novo pathway; UDP from UMP (UMPK route): step 1/1. With respect to regulation, inhibited by UTP. Its function is as follows. Catalyzes the reversible phosphorylation of UMP to UDP. The protein is Uridylate kinase of Azoarcus sp. (strain BH72).